Here is a 359-residue protein sequence, read N- to C-terminus: Peptide chain release factor 1 (359 aa).

Gln235 carries the post-translational modification N5-methylglutamine. Residues 280 to 306 (AERQRADSERSADRKSQVGSGDRSERI) form a disordered region.

Belongs to the prokaryotic/mitochondrial release factor family. Post-translationally, methylated by PrmC. Methylation increases the termination efficiency of RF1.

It localises to the cytoplasm. Peptide chain release factor 1 directs the termination of translation in response to the peptide chain termination codons UAG and UAA. The polypeptide is Peptide chain release factor 1 (Rhizobium johnstonii (strain DSM 114642 / LMG 32736 / 3841) (Rhizobium leguminosarum bv. viciae)).